The sequence spans 249 residues: Caffeoyl-CoA O-methyltransferase 1 (249 aa).

K23 is a binding site for substrate. Residues T65, E87, 89-90 (GV), S95, D113, and A142 contribute to the S-adenosyl-L-methionine site. A substrate-binding site is contributed by D165. D165 is a binding site for a divalent metal cation. An S-adenosyl-L-methionine-binding site is contributed by D167. Residues D191 and N192 each contribute to the a divalent metal cation site. N196 contacts substrate.

The protein belongs to the class I-like SAM-binding methyltransferase superfamily. Cation-dependent O-methyltransferase family. CCoAMT subfamily. Requires a divalent metal cation as cofactor. In terms of tissue distribution, mostly expressed in petal limbs and tubes, and, at low levels, in flower buds, stamens, pistils, stems, roots and leaves.

The protein resides in the cytoplasm. It is found in the cytosol. It catalyses the reaction (E)-caffeoyl-CoA + S-adenosyl-L-methionine = (E)-feruloyl-CoA + S-adenosyl-L-homocysteine + H(+). It carries out the reaction (E)-5-hydroxyferuloyl-CoA + S-adenosyl-L-methionine = (E)-sinapoyl-CoA + S-adenosyl-L-homocysteine + H(+). It participates in aromatic compound metabolism; phenylpropanoid biosynthesis. Functionally, involved in the production of floral volatile phenylpropanoids in flowers of fragrant cultivars (e.g. cv. Mitchell and cv. V26) from cinnamic acid, a common precursor with the anthocyanin biosynthesis pathway involved in flower pigmentation. Methylates caffeoyl-CoA to feruloyl-CoA, also able to methylate 5-hydroxyferuloyl-CoA. The chain is Caffeoyl-CoA O-methyltransferase 1 from Petunia hybrida (Petunia).